The sequence spans 76 residues: MEKLTILLLVAAVLMSTQALVERAGENRSKENIKFLLKRKRAADRGMWGKCKDGLTTCLAPSECCSGNCEQNCKMW.

Positions 1–19 (MEKLTILLLVAAVLMSTQA) are cleaved as a signal peptide. A propeptide spanning residues 20 to 45 (LVERAGENRSKENIKFLLKRKRAADR) is cleaved from the precursor. Intrachain disulfides connect cysteine 51–cysteine 65, cysteine 58–cysteine 69, and cysteine 64–cysteine 73.

Belongs to the conotoxin O2 superfamily. As to expression, expressed by the venom duct.

It localises to the secreted. In Conus textile (Cloth-of-gold cone), this protein is Conotoxin TxMEKL-011.